We begin with the raw amino-acid sequence, 424 residues long: Probable methyltransferase EP424R (424 aa).

The region spanning 103 to 315 (QIVTNAWLKM…TYIVGKNRLR (213 aa)) is the Adrift-type SAM-dependent 2'-O-MTase domain. 2 residues coordinate S-adenosyl-L-methionine: Gly-135 and Asp-228. The active-site Proton acceptor is the Lys-268.

It localises to the virion. This is Probable methyltransferase EP424R from Ornithodoros (relapsing fever ticks).